The primary structure comprises 586 residues: Alpha-1,2-mannosyltransferase MNN5 (586 aa).

A signal peptide spans 1–29 (MLIRLKKRKILQVIVSAVVLILFFCSVHN). N113, N136, N259, and N264 each carry an N-linked (GlcNAc...) asparagine glycan.

This sequence belongs to the MNN1/MNT family. Interacts with SVP26. Glycosylated.

It is found in the golgi apparatus. It localises to the cis-Golgi network. It participates in protein modification; protein glycosylation. Responsible for addition of first and second mannose residues to the outer chain of core N-linked polysaccharides and to O-linked mannotriose. Implicated in late Golgi modifications. In Saccharomyces cerevisiae (strain ATCC 204508 / S288c) (Baker's yeast), this protein is Alpha-1,2-mannosyltransferase MNN5 (MNN5).